A 131-amino-acid chain; its full sequence is Small ribosomal subunit protein uS11 (131 aa).

It belongs to the universal ribosomal protein uS11 family. As to quaternary structure, part of the 30S ribosomal subunit. Interacts with proteins S7 and S18. Binds to IF-3.

Located on the platform of the 30S subunit, it bridges several disparate RNA helices of the 16S rRNA. Forms part of the Shine-Dalgarno cleft in the 70S ribosome. This chain is Small ribosomal subunit protein uS11, found in Bacillus licheniformis (strain ATCC 14580 / DSM 13 / JCM 2505 / CCUG 7422 / NBRC 12200 / NCIMB 9375 / NCTC 10341 / NRRL NRS-1264 / Gibson 46).